We begin with the raw amino-acid sequence, 110 residues long: Ribonuclease P protein component 4 (110 aa).

C65, C68, C94, and C97 together coordinate Zn(2+).

The protein belongs to the eukaryotic/archaeal RNase P protein component 4 family. As to quaternary structure, consists of a catalytic RNA component and at least 4-5 protein subunits. The cofactor is Zn(2+).

The protein resides in the cytoplasm. It catalyses the reaction Endonucleolytic cleavage of RNA, removing 5'-extranucleotides from tRNA precursor.. In terms of biological role, part of ribonuclease P, a protein complex that generates mature tRNA molecules by cleaving their 5'-ends. In Methanococcus maripaludis (strain C6 / ATCC BAA-1332), this protein is Ribonuclease P protein component 4.